The primary structure comprises 694 residues: Elongation factor G (694 aa).

In terms of domain architecture, tr-type G spans Glu8 to Val283. GTP is bound by residues Ala17 to Thr24, Asp81 to His85, and Asn135 to Asp138.

Belongs to the TRAFAC class translation factor GTPase superfamily. Classic translation factor GTPase family. EF-G/EF-2 subfamily.

Its subcellular location is the cytoplasm. In terms of biological role, catalyzes the GTP-dependent ribosomal translocation step during translation elongation. During this step, the ribosome changes from the pre-translocational (PRE) to the post-translocational (POST) state as the newly formed A-site-bound peptidyl-tRNA and P-site-bound deacylated tRNA move to the P and E sites, respectively. Catalyzes the coordinated movement of the two tRNA molecules, the mRNA and conformational changes in the ribosome. In Paramagnetospirillum magneticum (strain ATCC 700264 / AMB-1) (Magnetospirillum magneticum), this protein is Elongation factor G.